The primary structure comprises 342 residues: Dihydroorotase (342 aa).

Zn(2+)-binding residues include His-13 and His-15. Residues 15-17 (HLR) and Asn-41 each bind substrate. Zn(2+)-binding residues include Lys-99, His-136, and His-174. Residue Lys-99 is modified to N6-carboxylysine. His-136 contributes to the substrate binding site. A substrate-binding site is contributed by Leu-218. Asp-246 contributes to the Zn(2+) binding site. Asp-246 is an active-site residue. Residues His-250 and Ala-262 each contribute to the substrate site.

The protein belongs to the metallo-dependent hydrolases superfamily. DHOase family. Class II DHOase subfamily. Homodimer. Zn(2+) is required as a cofactor.

The enzyme catalyses (S)-dihydroorotate + H2O = N-carbamoyl-L-aspartate + H(+). Its pathway is pyrimidine metabolism; UMP biosynthesis via de novo pathway; (S)-dihydroorotate from bicarbonate: step 3/3. Its function is as follows. Catalyzes the reversible cyclization of carbamoyl aspartate to dihydroorotate. This is Dihydroorotase from Synechocystis sp. (strain ATCC 27184 / PCC 6803 / Kazusa).